The primary structure comprises 319 residues: Methionyl-tRNA formyltransferase (319 aa).

114–117 (SLLP) lines the (6S)-5,6,7,8-tetrahydrofolate pocket.

It belongs to the Fmt family.

It carries out the reaction L-methionyl-tRNA(fMet) + (6R)-10-formyltetrahydrofolate = N-formyl-L-methionyl-tRNA(fMet) + (6S)-5,6,7,8-tetrahydrofolate + H(+). Attaches a formyl group to the free amino group of methionyl-tRNA(fMet). The formyl group appears to play a dual role in the initiator identity of N-formylmethionyl-tRNA by promoting its recognition by IF2 and preventing the misappropriation of this tRNA by the elongation apparatus. This chain is Methionyl-tRNA formyltransferase, found in Acinetobacter baylyi (strain ATCC 33305 / BD413 / ADP1).